Consider the following 380-residue polypeptide: MFRLLSWSLGRGFLRAAGRRCRGCSARLLPGLAGGPGPEVQVPPSRVAPHGRGPGLLPLLAALAWFSRPAAAEEEEQQGADGAAAEDGADEAEAEIIQLLKRAKLSIMKDEPEEAELILHDALRLAYQTDNKKAITYTYDLMANLAFIRGQLENAEQLFKATMSYLLGGGMKQEDNAIIEISLKLASIYAAQNRQEFAVAGYEFCISTLEEKIEREKELAEDIMSVEEKANTHLLLGMCLDACARYLLFSKQPSQAQRMYEKALQISEEIQGERHPQTIVLMSDLATTLDAQGRFDEAYIYMQRASDLARQINHPELHMVLSNLAAVLMHRERYTQAKEIYQEALKQAKLKKDEISVQHIREELAELSKKSRPLTNSVKL.

The N-terminal 70 residues, 1 to 70, are a transit peptide targeting the mitochondrion; it reads MFRLLSWSLG…AALAWFSRPA (70 aa). TPR repeat units follow at residues 136–169, 179–212, 237–270, 279–312, and 318–351; these read TYTY…LLGG, IEIS…LEEK, GMCL…SEEI, IVLM…ARQI, and HMVL…AKLK.

It belongs to the TTC19 family. As to quaternary structure, binds to the mature mitochondrial complex III dimer, after the incorporation of the Rieske protein UQCRFS1. Interacts with UQCRC1 and UQCRFS1. Interacts with ZFYVE26 and CHMP4B. Post-translationally, proteolytically cleaved by PARL.

It is found in the mitochondrion inner membrane. Required for the preservation of the structural and functional integrity of mitochondrial respiratory complex III by allowing the physiological turnover of the Rieske protein UQCRFS1. Involved in the clearance of UQCRFS1 N-terminal fragments, which are produced upon incorporation of UQCRFS1 into the complex III and whose presence is detrimental for its catalytic activity. The chain is Tetratricopeptide repeat protein 19, mitochondrial (TTC19) from Homo sapiens (Human).